The primary structure comprises 113 residues: U11-theraphotoxin-Hhn1t (113 aa).

The signal sequence occupies residues 1-21; that stretch reads MNTVRVTFLLVFVLAVSLGQA. A propeptide spanning residues 22 to 74 is cleaved from the precursor; that stretch reads DKDENRMEMQEKTEQGKSYLDFAENLLLQKLEELEAKLLEEDSEESRNSRQKR. A compositionally biased stretch (basic and acidic residues) spans 60 to 69; it reads LEEDSEESRN. A disordered region spans residues 60–83; sequence LEEDSEESRNSRQKRCIGEGVPCD. 3 cysteine pairs are disulfide-bonded: Cys-75/Cys-90, Cys-82/Cys-95, and Cys-89/Cys-110.

The protein belongs to the neurotoxin 14 (magi-1) family. 01 (HNTX-16) subfamily. In terms of tissue distribution, expressed by the venom gland.

The protein resides in the secreted. Probable ion channel inhibitor. In Cyriopagopus hainanus (Chinese bird spider), this protein is U11-theraphotoxin-Hhn1t.